The sequence spans 240 residues: Venom hemolysin-like protein 1 (240 aa).

Residues 1–18 form the signal peptide; that stretch reads MQYKLILLVVGLFQASLA. The tract at residues 25–50 is disordered; the sequence is ESVPHPSKDVAPPDTQDSSTQTEVTT. The span at 39–50 shows a compositional bias: polar residues; sequence TQDSSTQTEVTT.

As to expression, expressed by the venom gland (anterior main gland) (at protein level).

Its subcellular location is the secreted. The chain is Venom hemolysin-like protein 1 from Platymeris rhadamanthus (Red spot assassin bug).